A 535-amino-acid chain; its full sequence is Suppressor of cytokine signaling 6 (535 aa).

Residues 80-89 (RLSAKQKSKG) are compositionally biased toward basic residues. The interval 80 to 105 (RLSAKQKSKGKAGTPSGSSADEDTFS) is disordered. The SH2 domain maps to 384–491 (WYWGPITRWE…TYPVRLTNPV (108 aa)). An SOCS box domain is found at 486-535 (RLTNPVSRFMQVRSLQYLCRFVIRQYTRIDLIQKLPLPNKMKDYLQEKHY).

As to quaternary structure, interacts with RBCK1. Interacts with phosphorylated IRS4. Interacts with KIT (phosphorylated). Interacts with PIM3.

Its pathway is protein modification; protein ubiquitination. Its function is as follows. SOCS family proteins form part of a classical negative feedback system that regulates cytokine signal transduction. May be a substrate recognition component of a SCF-like ECS (Elongin BC-CUL2/5-SOCS-box protein) E3 ubiquitin-protein ligase complex which mediates the ubiquitination and subsequent proteasomal degradation of target proteins. Regulates KIT degradation by ubiquitination of the tyrosine-phosphorylated receptor. This is Suppressor of cytokine signaling 6 (SOCS6) from Pongo abelii (Sumatran orangutan).